We begin with the raw amino-acid sequence, 244 residues long: Osmotin-like protein OSM34 (244 aa).

A signal peptide spans 1-22; sequence MANLLVSTFIFSALLLISTATA. 8 cysteine pairs are disulfide-bonded: Cys31–Cys222, Cys72–Cys82, Cys87–Cys93, Cys138–Cys212, Cys143–Cys195, Cys151–Cys161, Cys165–Cys174, and Cys175–Cys182.

It belongs to the thaumatin family.

The sequence is that of Osmotin-like protein OSM34 (OSM34) from Arabidopsis thaliana (Mouse-ear cress).